Reading from the N-terminus, the 61-residue chain is MSKGTPSMGKRNKGSYHIRCRRCGRRAYHVRKKRCAACGFPNKRMRKYSWQNKKVNGKRIK.

Positions 20, 23, 35, and 38 each coordinate Zn(2+). A C4-type zinc finger spans residues 20–38 (CRRCGRRAYHVRKKRCAAC).

The protein belongs to the eukaryotic ribosomal protein eL37 family. Zn(2+) serves as cofactor.

Functionally, binds to the 23S rRNA. The polypeptide is Large ribosomal subunit protein eL37 (rpl37e) (Methanocaldococcus jannaschii (strain ATCC 43067 / DSM 2661 / JAL-1 / JCM 10045 / NBRC 100440) (Methanococcus jannaschii)).